Reading from the N-terminus, the 323-residue chain is Aspartate carbamoyltransferase catalytic subunit (323 aa).

Residues Arg-55 and Thr-56 each coordinate carbamoyl phosphate. Residue Lys-83 participates in L-aspartate binding. Carbamoyl phosphate-binding residues include Arg-105, His-133, and Gln-136. 2 residues coordinate L-aspartate: Arg-166 and Arg-220. Carbamoyl phosphate contacts are provided by Gly-261 and Pro-262.

Belongs to the aspartate/ornithine carbamoyltransferase superfamily. ATCase family. Heterododecamer (2C3:3R2) of six catalytic PyrB chains organized as two trimers (C3), and six regulatory PyrI chains organized as three dimers (R2).

It carries out the reaction carbamoyl phosphate + L-aspartate = N-carbamoyl-L-aspartate + phosphate + H(+). The protein operates within pyrimidine metabolism; UMP biosynthesis via de novo pathway; (S)-dihydroorotate from bicarbonate: step 2/3. Functionally, catalyzes the condensation of carbamoyl phosphate and aspartate to form carbamoyl aspartate and inorganic phosphate, the committed step in the de novo pyrimidine nucleotide biosynthesis pathway. This chain is Aspartate carbamoyltransferase catalytic subunit, found in Acidothermus cellulolyticus (strain ATCC 43068 / DSM 8971 / 11B).